A 172-amino-acid chain; its full sequence is MLDAFAKVVAQADARGEFLSNTQIDALSKMVKEGNQRLDIVNKVTSNASAIVTNSARALFAEQPQLIQPGGNAYTSRNMAACLRDMEIVLRYVSYAMLAGDSSVLDDRCLNGLRETYQALGTPGSSVAVAIQKMKDASVALANDTTGTPIGDCSSLVAELAGYFDRAAVSVV.

Asparagine 72 is modified (N4-methylasparagine). (2R,3E)-phycocyanobilin is bound at residue cysteine 82. Cysteine 153 serves as a coordination point for (2R,3E)-phycoerythrobilin.

It belongs to the phycobiliprotein family. In terms of assembly, heterodimer of an alpha and a beta chain. Dimers further assemble into trimers and the trimers into hexamers. The basic functional unit of phycobiliproteins is a ring-shaped hexamer formed from two back-to-back trimers contacting via the alpha chain subunits. The trimers are composed of alpha/beta subunit heterodimers arranged around a three-fold axis of symmetry. The phycoerythrins also contain a gamma subunit which is located in the center of the hexamer. Contains two covalently linked bilin chromophores.

It is found in the plastid. It localises to the chloroplast thylakoid membrane. In terms of biological role, light-harvesting photosynthetic bile pigment-protein from the phycobiliprotein complex (phycobilisome, PBS). Phycocyanin is the major phycobiliprotein in the PBS rod. This is R-phycocyanin-1 beta chain (rpcB) from Porphyridium purpureum (Red alga).